Consider the following 101-residue polypeptide: Small ribosomal subunit protein uS14A (101 aa).

The disordered stretch occupies residues 31-59 (IRSPASSPEQRVAAQSELNRQPRDASAVR).

It belongs to the universal ribosomal protein uS14 family. In terms of assembly, part of the 30S ribosomal subunit. Contacts proteins S3 and S10.

In terms of biological role, binds 16S rRNA, required for the assembly of 30S particles and may also be responsible for determining the conformation of the 16S rRNA at the A site. This is Small ribosomal subunit protein uS14A from Mycobacteroides abscessus (strain ATCC 19977 / DSM 44196 / CCUG 20993 / CIP 104536 / JCM 13569 / NCTC 13031 / TMC 1543 / L948) (Mycobacterium abscessus).